Here is a 280-residue protein sequence, read N- to C-terminus: 3-methyl-2-oxobutanoate hydroxymethyltransferase (280 aa).

2 residues coordinate Mg(2+): aspartate 49 and aspartate 88. 3-methyl-2-oxobutanoate-binding positions include 49 to 50 (DS), aspartate 88, and lysine 118. Mg(2+) is bound at residue glutamate 120. Catalysis depends on glutamate 186, which acts as the Proton acceptor.

This sequence belongs to the PanB family. As to quaternary structure, homodecamer; pentamer of dimers. Requires Mg(2+) as cofactor.

The protein resides in the cytoplasm. The enzyme catalyses 3-methyl-2-oxobutanoate + (6R)-5,10-methylene-5,6,7,8-tetrahydrofolate + H2O = 2-dehydropantoate + (6S)-5,6,7,8-tetrahydrofolate. It participates in cofactor biosynthesis; (R)-pantothenate biosynthesis; (R)-pantoate from 3-methyl-2-oxobutanoate: step 1/2. Functionally, catalyzes the reversible reaction in which hydroxymethyl group from 5,10-methylenetetrahydrofolate is transferred onto alpha-ketoisovalerate to form ketopantoate. In Ruegeria sp. (strain TM1040) (Silicibacter sp.), this protein is 3-methyl-2-oxobutanoate hydroxymethyltransferase.